Reading from the N-terminus, the 99-residue chain is Putative type 4B encapsulin shell protein PF1875 (99 aa).

Belongs to the encapsulin family. Family 4B subfamily. In terms of assembly, may self-assemble into facets and potentially into larger complexes.

It localises to the encapsulin nanocompartment. May be the encapsulin shell protein in a type 4 A-domain encapsulin nanocompartment system. Its cargo may be upstream glyceraldehyde-3-phosphate dehydrogenase (AC P61879). In Pyrococcus furiosus (strain ATCC 43587 / DSM 3638 / JCM 8422 / Vc1), this protein is Putative type 4B encapsulin shell protein PF1875.